Consider the following 89-residue polypeptide: MARVTVQGAVEKIGNRFDLILTAARRARQLQLHIREPLVPEDNDKPTVIALREIEKGLINNEIMNAQERYDALEKENSELHAVSLLSNQ.

The protein belongs to the RNA polymerase subunit omega family. As to quaternary structure, the RNAP catalytic core consists of 2 alpha, 1 beta, 1 beta' and 1 omega subunit. When a sigma factor is associated with the core the holoenzyme is formed, which can initiate transcription.

The catalysed reaction is RNA(n) + a ribonucleoside 5'-triphosphate = RNA(n+1) + diphosphate. In terms of biological role, promotes RNA polymerase assembly. Latches the N- and C-terminal regions of the beta' subunit thereby facilitating its interaction with the beta and alpha subunits. The protein is DNA-directed RNA polymerase subunit omega (rpoZ) of Pasteurella multocida (strain Pm70).